A 313-amino-acid polypeptide reads, in one-letter code: Porphobilinogen deaminase (313 aa).

Residue Cys-242 is modified to S-(dipyrrolylmethanemethyl)cysteine.

The protein belongs to the HMBS family. Monomer. Dipyrromethane serves as cofactor.

The enzyme catalyses 4 porphobilinogen + H2O = hydroxymethylbilane + 4 NH4(+). It participates in porphyrin-containing compound metabolism; protoporphyrin-IX biosynthesis; coproporphyrinogen-III from 5-aminolevulinate: step 2/4. Tetrapolymerization of the monopyrrole PBG into the hydroxymethylbilane pre-uroporphyrinogen in several discrete steps. This is Porphobilinogen deaminase from Shigella flexneri.